A 101-amino-acid polypeptide reads, in one-letter code: Small ribosomal subunit protein bS18c (101 aa).

The protein belongs to the bacterial ribosomal protein bS18 family. In terms of assembly, part of the 30S ribosomal subunit.

The protein resides in the plastid. The protein localises to the chloroplast. The protein is Small ribosomal subunit protein bS18c of Morus indica (Mulberry).